Reading from the N-terminus, the 339-residue chain is Large ribosomal subunit protein uL11m (339 aa).

Belongs to the universal ribosomal protein uL11 family.

The protein resides in the mitochondrion. This Acanthamoeba castellanii (Amoeba) protein is Large ribosomal subunit protein uL11m (RPL11).